The chain runs to 156 residues: Small ribosomal subunit protein uS7 (156 aa).

This sequence belongs to the universal ribosomal protein uS7 family. In terms of assembly, part of the 30S ribosomal subunit. Contacts proteins S9 and S11.

In terms of biological role, one of the primary rRNA binding proteins, it binds directly to 16S rRNA where it nucleates assembly of the head domain of the 30S subunit. Is located at the subunit interface close to the decoding center, probably blocks exit of the E-site tRNA. This is Small ribosomal subunit protein uS7 from Buchnera aphidicola subsp. Cinara cedri (strain Cc).